Reading from the N-terminus, the 622-residue chain is Low affinity potassium transport system protein Kup (622 aa).

A run of 12 helical transmembrane segments spans residues 9–29 (LPAI…TSPL), 49–69 (VFGF…IKYL), 103–123 (VIMG…TPAI), 137–157 (PQLD…LFMI), 165–185 (VGKL…GLGL), 213–233 (VSFI…ALYA), 247–267 (WFTV…ALLL), 276–296 (PFFL…AALA), 337–357 (IYIP…IVSF), 363–383 (LAAA…ILST), 396–416 (FVAL…TANL), and 419–439 (LLSG…VMTT).

The protein belongs to the HAK/KUP transporter (TC 2.A.72) family.

Its subcellular location is the cell inner membrane. It carries out the reaction K(+)(in) + H(+)(in) = K(+)(out) + H(+)(out). Functionally, responsible for the low-affinity transport of potassium into the cell. Likely operates as a K(+):H(+) symporter. The protein is Low affinity potassium transport system protein Kup of Escherichia coli O157:H7.